The sequence spans 521 residues: Maturase K (521 aa).

The protein belongs to the intron maturase 2 family. MatK subfamily.

It localises to the plastid. Its subcellular location is the chloroplast. Functionally, usually encoded in the trnK tRNA gene intron. Probably assists in splicing its own and other chloroplast group II introns. The polypeptide is Maturase K (Trillium erectum (Beth root)).